The sequence spans 157 residues: SsrA-binding protein (157 aa).

Belongs to the SmpB family.

Its subcellular location is the cytoplasm. Its function is as follows. Required for rescue of stalled ribosomes mediated by trans-translation. Binds to transfer-messenger RNA (tmRNA), required for stable association of tmRNA with ribosomes. tmRNA and SmpB together mimic tRNA shape, replacing the anticodon stem-loop with SmpB. tmRNA is encoded by the ssrA gene; the 2 termini fold to resemble tRNA(Ala) and it encodes a 'tag peptide', a short internal open reading frame. During trans-translation Ala-aminoacylated tmRNA acts like a tRNA, entering the A-site of stalled ribosomes, displacing the stalled mRNA. The ribosome then switches to translate the ORF on the tmRNA; the nascent peptide is terminated with the 'tag peptide' encoded by the tmRNA and targeted for degradation. The ribosome is freed to recommence translation, which seems to be the essential function of trans-translation. In Chlorobium chlorochromatii (strain CaD3), this protein is SsrA-binding protein.